The sequence spans 312 residues: Ribonuclease Z (312 aa).

Zn(2+) is bound by residues His-63, His-65, Asp-67, His-68, His-140, Asp-211, and His-269. Asp-67 acts as the Proton acceptor in catalysis.

This sequence belongs to the RNase Z family. Homodimer. Zn(2+) is required as a cofactor.

It catalyses the reaction Endonucleolytic cleavage of RNA, removing extra 3' nucleotides from tRNA precursor, generating 3' termini of tRNAs. A 3'-hydroxy group is left at the tRNA terminus and a 5'-phosphoryl group is left at the trailer molecule.. In terms of biological role, zinc phosphodiesterase, which displays some tRNA 3'-processing endonuclease activity. Probably involved in tRNA maturation, by removing a 3'-trailer from precursor tRNA. This Shouchella clausii (strain KSM-K16) (Alkalihalobacillus clausii) protein is Ribonuclease Z.